A 515-amino-acid polypeptide reads, in one-letter code: ATP synthase subunit alpha (515 aa).

Position 169–176 (169–176 (GDRQTGKT)) interacts with ATP.

It belongs to the ATPase alpha/beta chains family. F-type ATPases have 2 components, CF(1) - the catalytic core - and CF(0) - the membrane proton channel. CF(1) has five subunits: alpha(3), beta(3), gamma(1), delta(1), epsilon(1). CF(0) has three main subunits: a(1), b(2) and c(9-12). The alpha and beta chains form an alternating ring which encloses part of the gamma chain. CF(1) is attached to CF(0) by a central stalk formed by the gamma and epsilon chains, while a peripheral stalk is formed by the delta and b chains.

It localises to the cell inner membrane. The catalysed reaction is ATP + H2O + 4 H(+)(in) = ADP + phosphate + 5 H(+)(out). Functionally, produces ATP from ADP in the presence of a proton gradient across the membrane. The alpha chain is a regulatory subunit. This is ATP synthase subunit alpha from Neisseria meningitidis serogroup C / serotype 2a (strain ATCC 700532 / DSM 15464 / FAM18).